Here is a 197-residue protein sequence, read N- to C-terminus: Protein Hikeshi (197 aa).

Positions 18-55 are required for F-X-F-G repeats-nucleoporins recognition and nuclear import; the sequence is VAEDKFVFDLPDYENINHVVVFMLGTIPFPEGMGGSVY. A flexible linker region involved in nuclear import of HSP70 proteins region spans residues 124–134; sequence QTPVGSAAVSS.

Belongs to the OPI10 family. In terms of assembly, forms an asymmetric homodimer; required for binding and nuclear import of HSP70 proteins. Interacts with ATP-bound HSP70 proteins. Interacts with NUP62 and NUP153 (via F-X-F-G repeats). Interacts with HSPA8. In terms of tissue distribution, expressed in the central white matter of newborn and adult brain, particularly in regions where oligodendrocytes are generated.

It localises to the cytoplasm. It is found in the cytosol. The protein resides in the nucleus. Its function is as follows. Acts as a specific nuclear import carrier for HSP70 proteins following heat-shock stress: acts by mediating the nucleoporin-dependent translocation of ATP-bound HSP70 proteins into the nucleus. HSP70 proteins import is required to protect cells from heat shock damages. Does not translocate ADP-bound HSP70 proteins into the nucleus. May also be indirectly required for organization and/or function of the secretory apparatus in Club cells in lung. The chain is Protein Hikeshi from Mus musculus (Mouse).